A 110-amino-acid polypeptide reads, in one-letter code: UPF0060 membrane protein Haur_1798 (110 aa).

Helical transmembrane passes span 7–27, 33–53, 63–83, and 89–109; these read VVLF…VWQW, SIWF…LPTL, VYAA…WLID, and QPSL…LYWP.

The protein belongs to the UPF0060 family.

The protein resides in the cell membrane. This is UPF0060 membrane protein Haur_1798 from Herpetosiphon aurantiacus (strain ATCC 23779 / DSM 785 / 114-95).